A 108-amino-acid chain; its full sequence is Cytochrome c (108 aa).

Residues Cys-19, Cys-22, His-23, and Met-85 each coordinate heme c.

The protein belongs to the cytochrome c family. In terms of processing, binds 1 heme c group covalently per subunit.

It is found in the mitochondrion intermembrane space. Its function is as follows. Electron carrier protein. The oxidized form of the cytochrome c heme group can accept an electron from the heme group of the cytochrome c1 subunit of cytochrome reductase. Cytochrome c then transfers this electron to the cytochrome oxidase complex, the final protein carrier in the mitochondrial electron-transport chain. This is Cytochrome c from Stellaria longipes (Longstalk starwort).